Consider the following 246-residue polypeptide: 23S rRNA (guanosine-2'-O-)-methyltransferase RlmB (246 aa).

Residues Gly197, Ile217, and Leu226 each contribute to the S-adenosyl-L-methionine site.

This sequence belongs to the class IV-like SAM-binding methyltransferase superfamily. RNA methyltransferase TrmH family. RlmB subfamily.

It is found in the cytoplasm. It catalyses the reaction guanosine(2251) in 23S rRNA + S-adenosyl-L-methionine = 2'-O-methylguanosine(2251) in 23S rRNA + S-adenosyl-L-homocysteine + H(+). Its function is as follows. Specifically methylates the ribose of guanosine 2251 in 23S rRNA. This is 23S rRNA (guanosine-2'-O-)-methyltransferase RlmB from Haemophilus influenzae (strain ATCC 51907 / DSM 11121 / KW20 / Rd).